The primary structure comprises 227 residues: Flagellar L-ring protein (227 aa).

A signal peptide spans 1–16 (MRNIILFAAGTLLLSG). Cys-17 is lipidated: N-palmitoyl cysteine. The S-diacylglycerol cysteine moiety is linked to residue Cys-17.

The protein belongs to the FlgH family. In terms of assembly, the basal body constitutes a major portion of the flagellar organelle and consists of four rings (L,P,S, and M) mounted on a central rod.

The protein localises to the cell outer membrane. It is found in the bacterial flagellum basal body. Functionally, assembles around the rod to form the L-ring and probably protects the motor/basal body from shearing forces during rotation. The polypeptide is Flagellar L-ring protein (Pseudoalteromonas translucida (strain TAC 125)).